Consider the following 545-residue polypeptide: Chaperonin GroEL (545 aa).

ATP-binding positions include 30 to 33 (TLGP), K51, 87 to 91 (DGTTT), G413, 477 to 479 (NAA), and D493.

Belongs to the chaperonin (HSP60) family. In terms of assembly, forms a cylinder of 14 subunits composed of two heptameric rings stacked back-to-back. Interacts with the co-chaperonin GroES.

It is found in the cytoplasm. The catalysed reaction is ATP + H2O + a folded polypeptide = ADP + phosphate + an unfolded polypeptide.. In terms of biological role, together with its co-chaperonin GroES, plays an essential role in assisting protein folding. The GroEL-GroES system forms a nano-cage that allows encapsulation of the non-native substrate proteins and provides a physical environment optimized to promote and accelerate protein folding. The sequence is that of Chaperonin GroEL from Pseudomonas putida (Arthrobacter siderocapsulatus).